The primary structure comprises 389 residues: Probable peptidoglycan glycosyltransferase FtsW (389 aa).

The Cytoplasmic segment spans residues 1–14 (MPIRDWRQQSQRWP). Residues 15–35 (IDYWLIGALAILITLGLTMVA) traverse the membrane as a helical segment. Topologically, residues 36–57 (SSSIAISEKRFGDPTHYLLRQM) are periplasmic. The chain crosses the membrane as a helical span at residues 58-78 (FSMGLGLMAAYIVLKIPLSFW). At 79–84 (RKHRGQ) the chain is on the cytoplasmic side. Residues 85–105 (LFIVGLVLLVLVLVFGREING) form a helical membrane-spanning segment. The Periplasmic segment spans residues 106-111 (SKRWLP). The chain crosses the membrane as a helical span at residues 112–132 (LVLMNFQVSEFMKIAVVVFMA). The Cytoplasmic segment spans residues 133–144 (GYLDRHATAVRE). A helical membrane pass occupies residues 145–165 (SFEAVIRLALPFGVMAILLLL). At 166–168 (EPD) the chain is on the periplasmic side. A helical transmembrane segment spans residues 169–189 (FGSTFVIAVIITGMLLIAGAP). At 190–191 (WR) the chain is on the cytoplasmic side. A helical membrane pass occupies residues 192 to 212 (FFVMTVLPIATLLVMMVITSP). The Periplasmic segment spans residues 213-268 (YRMARVTNFLDPWSDPFGNGYQLTQALIASGRGEWFGVGIGESVQKLLYLPDAHTD). The chain crosses the membrane as a helical span at residues 269 to 289 (FLFSIYAEEYGLIGVAFLALL). The Cytoplasmic segment spans residues 290–310 (YLTLLYRCFRIGRKAFNQTHY). The helical transmembrane segment at 311 to 331 (FGGLIAYGVGIWIVLQAMINM) threads the bilayer. Topologically, residues 332-344 (GVNLGLFPTKGLT) are periplasmic. Residues 345-365 (LPFMSYGGSSVLMLFIGVAMV) form a helical membrane-spanning segment. Over 366-389 (LRVDLETRQAVLEHSVDESGQGKR) the chain is Cytoplasmic.

This sequence belongs to the SEDS family. FtsW subfamily.

Its subcellular location is the cell inner membrane. It carries out the reaction [GlcNAc-(1-&gt;4)-Mur2Ac(oyl-L-Ala-gamma-D-Glu-L-Lys-D-Ala-D-Ala)](n)-di-trans,octa-cis-undecaprenyl diphosphate + beta-D-GlcNAc-(1-&gt;4)-Mur2Ac(oyl-L-Ala-gamma-D-Glu-L-Lys-D-Ala-D-Ala)-di-trans,octa-cis-undecaprenyl diphosphate = [GlcNAc-(1-&gt;4)-Mur2Ac(oyl-L-Ala-gamma-D-Glu-L-Lys-D-Ala-D-Ala)](n+1)-di-trans,octa-cis-undecaprenyl diphosphate + di-trans,octa-cis-undecaprenyl diphosphate + H(+). It participates in cell wall biogenesis; peptidoglycan biosynthesis. Its function is as follows. Peptidoglycan polymerase that is essential for cell division. In Hydrogenovibrio crunogenus (strain DSM 25203 / XCL-2) (Thiomicrospira crunogena), this protein is Probable peptidoglycan glycosyltransferase FtsW.